A 59-amino-acid chain; its full sequence is Potassium channel toxin alpha-KTx 16.2 (59 aa).

The first 22 residues, 1 to 22 (MKIFSILLVALIICSISICTEA), serve as a signal peptide directing secretion. Cystine bridges form between Cys-30–Cys-51, Cys-36–Cys-56, and Cys-40–Cys-58.

It belongs to the short scorpion toxin superfamily. Potassium channel inhibitor family. Alpha-KTx 16 subfamily. Expressed by the venom gland.

It localises to the secreted. Functionally, alpha-KTx 16.2: inhibits large conductance calcium-activated potassium channels (KCa1.1/Slo-beta4 KCNMA1/KCNMB4). It appears to block channel activity by a simple bimolecular inhibition process. Shows a fast association rate and a slow dissociation rate of binding on rat brain synaptosome. Significantly inhibits voltage-dependent sodium current and voltage-dependent delayed rectifier potassium currents. In terms of biological role, significantly inhibits voltage-dependent sodium current (Nav) and voltage-dependent delayed rectifier potassium current. This Olivierus martensii (Manchurian scorpion) protein is Potassium channel toxin alpha-KTx 16.2.